The chain runs to 312 residues: Protoheme IX farnesyltransferase (312 aa).

9 consecutive transmembrane segments (helical) span residues 31-51, 58-78, 107-127, 130-150, 157-177, 184-204, 229-249, 250-270, and 286-306; these read LLMKPSVMLLAVFTAITGLFI, PLLSSIAILCISTGAGAAGAI, TALTFGIILAFFSVLVMAICV, ISSILLLISISFYIIVYTMWL, NIVIGGAAGALPPVIGYSAVT, CLMLFLIIFLWTPAHFWTLSL, YSILAYTFLTVISASLPYFTD, IAGLLYLICSTISGIIFLCYA, and FKYSIIYLFNIFLYLIIEHCI.

The protein belongs to the UbiA prenyltransferase family. Protoheme IX farnesyltransferase subfamily.

Its subcellular location is the cell inner membrane. The catalysed reaction is heme b + (2E,6E)-farnesyl diphosphate + H2O = Fe(II)-heme o + diphosphate. The protein operates within porphyrin-containing compound metabolism; heme O biosynthesis; heme O from protoheme: step 1/1. Converts heme B (protoheme IX) to heme O by substitution of the vinyl group on carbon 2 of heme B porphyrin ring with a hydroxyethyl farnesyl side group. This Orientia tsutsugamushi (strain Ikeda) (Rickettsia tsutsugamushi) protein is Protoheme IX farnesyltransferase.